The chain runs to 594 residues: Elongation factor 4 (594 aa).

A tr-type G domain is found at 2 to 184 (KNIRNFSIIA…TIVAKVPAPE (183 aa)). Residues 14 to 19 (DHGKST) and 131 to 134 (NKID) contribute to the GTP site.

This sequence belongs to the TRAFAC class translation factor GTPase superfamily. Classic translation factor GTPase family. LepA subfamily.

The protein resides in the cell inner membrane. The catalysed reaction is GTP + H2O = GDP + phosphate + H(+). In terms of biological role, required for accurate and efficient protein synthesis under certain stress conditions. May act as a fidelity factor of the translation reaction, by catalyzing a one-codon backward translocation of tRNAs on improperly translocated ribosomes. Back-translocation proceeds from a post-translocation (POST) complex to a pre-translocation (PRE) complex, thus giving elongation factor G a second chance to translocate the tRNAs correctly. Binds to ribosomes in a GTP-dependent manner. The polypeptide is Elongation factor 4 (Francisella tularensis subsp. tularensis (strain WY96-3418)).